The following is a 174-amino-acid chain: Ribosome maturation factor RimM (174 aa).

In terms of domain architecture, PRC barrel spans 96-170 (PDEFYDHELE…YVVIDPPEGL (75 aa)).

The protein belongs to the RimM family. Binds ribosomal protein uS19.

Its subcellular location is the cytoplasm. Its function is as follows. An accessory protein needed during the final step in the assembly of 30S ribosomal subunit, possibly for assembly of the head region. Essential for efficient processing of 16S rRNA. May be needed both before and after RbfA during the maturation of 16S rRNA. It has affinity for free ribosomal 30S subunits but not for 70S ribosomes. The chain is Ribosome maturation factor RimM from Nocardia farcinica (strain IFM 10152).